Here is a 162-residue protein sequence, read N- to C-terminus: Caveolin-2 (162 aa).

The Cytoplasmic segment spans residues 1-86; it reads MGLETEKTDV…FEISKYVMYK (86 aa). At Tyr-19 the chain carries Phosphotyrosine; by SRC. Phosphoserine occurs at positions 20 and 23. At Tyr-27 the chain carries Phosphotyrosine; by SRC. At Ser-36 the chain carries Phosphoserine. The segment at residues 87-107 is an intramembrane region (helical); it reads FLTVFLAIPLAFLAGILFATL. The Cytoplasmic portion of the chain corresponds to 108–162; that stretch reads SCLHIWIIMPFVKTCLMVLPSVQTIWKSVTDAIVAPLCTSIGRSFSSVSLQLSQD.

Belongs to the caveolin family. Monomer or homodimer. Interacts with CAV1; the interaction forms a stable heterooligomeric complex that is required for targeting to lipid rafts and for caveolae formation. Tyrosine phosphorylated forms do not form heterooligomers with the Tyr-19-phosphorylated form existing as a monomer or dimer, and the Tyr-27-form as a monomer only. Interacts (tyrosine phosphorylated form) with the SH2 domain-containing proteins, RASA1, NCK1 and SRC. Interacts (tyrosine phosphorylated form) with INSR, the interaction (Tyr-27-phosphorylated form) is increased on insulin stimulation. Interacts (Tyr-19 phosphorylated form) with MAPK1 (phosphorylated form); the interaction, promoted by insulin, leads to nuclear location and MAPK1 activation. Interacts with STAT3; the interaction is increased on insulin-induced tyrosine phosphorylation leading to STAT activation. Phosphorylated on serine and tyrosine residues. CAV1 promotes phosphorylation on Ser-23 which then targets the complex to the plasma membrane, lipid rafts and caveolae. Phosphorylation on Ser-36 appears to modulate mitosis in endothelial cells. Phosphorylation on both Tyr-19 and Tyr-27 is required for insulin-induced 'Ser-727' phosphorylation of STAT3 and its activation. Phosphorylation on Tyr-19 is required for insulin-induced phosphorylation of MAPK1 and DNA binding of STAT3. Tyrosine phosphorylation is induced by both EGF and insulin (By. similarity).

It is found in the nucleus. The protein resides in the cytoplasm. The protein localises to the golgi apparatus membrane. It localises to the cell membrane. Its subcellular location is the membrane. It is found in the caveola. In terms of biological role, may act as a scaffolding protein within caveolar membranes. Interacts directly with G-protein alpha subunits and can functionally regulate their activity. Acts as an accessory protein in conjunction with CAV1 in targeting to lipid rafts and driving caveolae formation. The Ser-36 phosphorylated form has a role in modulating mitosis in endothelial cells. Positive regulator of cellular mitogenesis of the MAPK signaling pathway. Required for the insulin-stimulated nuclear translocation and activation of MAPK1 and STAT3, and the subsequent regulation of cell cycle progression. The polypeptide is Caveolin-2 (CAV2) (Aotus nancymaae (Ma's night monkey)).